Here is a 495-residue protein sequence, read N- to C-terminus: Probable cytosol aminopeptidase (495 aa).

The Mn(2+) site is built by lysine 258 and aspartate 263. Lysine 270 is an active-site residue. Positions 281, 340, and 342 each coordinate Mn(2+). Residue arginine 344 is part of the active site.

It belongs to the peptidase M17 family. The cofactor is Mn(2+).

The protein localises to the cytoplasm. The catalysed reaction is Release of an N-terminal amino acid, Xaa-|-Yaa-, in which Xaa is preferably Leu, but may be other amino acids including Pro although not Arg or Lys, and Yaa may be Pro. Amino acid amides and methyl esters are also readily hydrolyzed, but rates on arylamides are exceedingly low.. It catalyses the reaction Release of an N-terminal amino acid, preferentially leucine, but not glutamic or aspartic acids.. Functionally, presumably involved in the processing and regular turnover of intracellular proteins. Catalyzes the removal of unsubstituted N-terminal amino acids from various peptides. The polypeptide is Probable cytosol aminopeptidase (Leptospira interrogans serogroup Icterohaemorrhagiae serovar copenhageni (strain Fiocruz L1-130)).